Reading from the N-terminus, the 212-residue chain is Protein DEPP1 (212 aa).

3 disordered regions span residues 20 to 39, 49 to 79, and 113 to 176; these read EEMLLGGPGQEPPPSPSLDD, QPTSVLDKATAQGQPRPPHRPAQACRKGRPA, and QEKQ…SDLR. Residues 113-124 are compositionally biased toward basic and acidic residues; it reads QEKQPSQRDLPR.

As to expression, expressed in various tissues, including pancreas, placenta, ovary, testis and kidney.

Its subcellular location is the cytoplasm. The protein resides in the peroxisome. It localises to the mitochondrion. Acts as a critical modulator of FOXO3-induced autophagy via increased cellular ROS. This is Protein DEPP1 from Homo sapiens (Human).